A 208-amino-acid polypeptide reads, in one-letter code: Large ribosomal subunit protein uL3 (208 aa).

Positions 122 to 148 (KRHGQSRGPMAHGSRYHRRPGSMGPVA) are disordered.

The protein belongs to the universal ribosomal protein uL3 family. As to quaternary structure, part of the 50S ribosomal subunit. Forms a cluster with proteins L14 and L19.

Functionally, one of the primary rRNA binding proteins, it binds directly near the 3'-end of the 23S rRNA, where it nucleates assembly of the 50S subunit. The sequence is that of Large ribosomal subunit protein uL3 from Streptococcus pyogenes serotype M1.